Here is a 297-residue protein sequence, read N- to C-terminus: D-aminoacyl-tRNA deacylase (297 aa).

Belongs to the DtdA deacylase family. In terms of assembly, monomer. Requires Zn(2+) as cofactor.

It carries out the reaction a D-aminoacyl-tRNA + H2O = a tRNA + a D-alpha-amino acid + H(+). It catalyses the reaction glycyl-tRNA(Ala) + H2O = tRNA(Ala) + glycine + H(+). Its function is as follows. D-aminoacyl-tRNA deacylase with broad substrate specificity. By recycling D-aminoacyl-tRNA to D-amino acids and free tRNA molecules, this enzyme counteracts the toxicity associated with the formation of D-aminoacyl-tRNA entities in vivo. This Methanosarcina mazei (strain ATCC BAA-159 / DSM 3647 / Goe1 / Go1 / JCM 11833 / OCM 88) (Methanosarcina frisia) protein is D-aminoacyl-tRNA deacylase.